The primary structure comprises 320 residues: MTANVCLDESVRPRLLDDFIGQDELRANMRVYLDAARERGQAMDHVLFYGNPGLGKTTLAQIMAGELGVNLVSTSGPVLERSGDLAAILTNLGRHDLLFVDEIHRMPIAVEEVLYPAMEDFKLDLVIGQGPGARTVKIDVEPFTLVGATTRIGLLSSPLRDRFGIISRLEYYTPADLARIVARTARIIGANLTEEGAIEIGRRARGTPRIANRLLRRVRDFATVHAGGVISADLASEALGRMEVDESGLDQMDRKLLEVLIEHYGGGPVGIKTLAVACAEEVRTIEDIYEPYLIQCGFLKRTPRGRVATAKAYRHLNLLG.

A large ATPase domain (RuvB-L) region spans residues 1–172 (MTANVCLDES…FGIISRLEYY (172 aa)). Residues Arg-12, Gly-53, Lys-56, Thr-57, Thr-58, 119–121 (EDF), Arg-162, Tyr-172, and Arg-209 contribute to the ATP site. Thr-57 provides a ligand contact to Mg(2+). Residues 173–243 (TPADLARIVA…LASEALGRME (71 aa)) form a small ATPAse domain (RuvB-S) region. The segment at 246 to 320 (ESGLDQMDRK…KAYRHLNLLG (75 aa)) is head domain (RuvB-H). Arg-301 and Arg-306 together coordinate DNA.

Belongs to the RuvB family. In terms of assembly, homohexamer. Forms an RuvA(8)-RuvB(12)-Holliday junction (HJ) complex. HJ DNA is sandwiched between 2 RuvA tetramers; dsDNA enters through RuvA and exits via RuvB. An RuvB hexamer assembles on each DNA strand where it exits the tetramer. Each RuvB hexamer is contacted by two RuvA subunits (via domain III) on 2 adjacent RuvB subunits; this complex drives branch migration. In the full resolvosome a probable DNA-RuvA(4)-RuvB(12)-RuvC(2) complex forms which resolves the HJ.

The protein localises to the cytoplasm. It catalyses the reaction ATP + H2O = ADP + phosphate + H(+). The RuvA-RuvB-RuvC complex processes Holliday junction (HJ) DNA during genetic recombination and DNA repair, while the RuvA-RuvB complex plays an important role in the rescue of blocked DNA replication forks via replication fork reversal (RFR). RuvA specifically binds to HJ cruciform DNA, conferring on it an open structure. The RuvB hexamer acts as an ATP-dependent pump, pulling dsDNA into and through the RuvAB complex. RuvB forms 2 homohexamers on either side of HJ DNA bound by 1 or 2 RuvA tetramers; 4 subunits per hexamer contact DNA at a time. Coordinated motions by a converter formed by DNA-disengaged RuvB subunits stimulates ATP hydrolysis and nucleotide exchange. Immobilization of the converter enables RuvB to convert the ATP-contained energy into a lever motion, pulling 2 nucleotides of DNA out of the RuvA tetramer per ATP hydrolyzed, thus driving DNA branch migration. The RuvB motors rotate together with the DNA substrate, which together with the progressing nucleotide cycle form the mechanistic basis for DNA recombination by continuous HJ branch migration. Branch migration allows RuvC to scan DNA until it finds its consensus sequence, where it cleaves and resolves cruciform DNA. The chain is Holliday junction branch migration complex subunit RuvB from Nitratidesulfovibrio vulgaris (strain ATCC 29579 / DSM 644 / CCUG 34227 / NCIMB 8303 / VKM B-1760 / Hildenborough) (Desulfovibrio vulgaris).